The following is a 485-amino-acid chain: Acyl transferase 1 (485 aa).

Histidine 172 (proton acceptor) is an active-site residue.

It belongs to the plant acyltransferase family. As to expression, highly expressed in young panicles. Expressed in leaf sheaths and panicles.

Involved in defense against pathogens. May contribute to disease resistance by potentiating disease resistance signaling, or producing phytoalexin-like secondary products. The polypeptide is Acyl transferase 1 (Oryza sativa subsp. japonica (Rice)).